The following is a 201-amino-acid chain: UPF0301 protein Bpet0561 (201 aa).

It belongs to the UPF0301 (AlgH) family.

In Bordetella petrii (strain ATCC BAA-461 / DSM 12804 / CCUG 43448), this protein is UPF0301 protein Bpet0561.